A 182-amino-acid chain; its full sequence is uncharacterized protein (182 aa).

Helical transmembrane passes span leucine 19–serine 39, isoleucine 51–isoleucine 71, isoleucine 87–phenylalanine 107, and cysteine 118–cysteine 138.

The protein resides in the membrane. This is an uncharacterized protein from Caenorhabditis elegans.